A 199-amino-acid chain; its full sequence is Recombination protein RecR (199 aa).

The C4-type zinc finger occupies 57–72 (CSQCHNITDTDPCQIC). A Toprim domain is found at 80–176 (TTICVVQESR…KVTRLAHGLP (97 aa)).

The protein belongs to the RecR family.

May play a role in DNA repair. It seems to be involved in an RecBC-independent recombinational process of DNA repair. It may act with RecF and RecO. The protein is Recombination protein RecR of Shouchella clausii (strain KSM-K16) (Alkalihalobacillus clausii).